Reading from the N-terminus, the 651-residue chain is E3 SUMO-protein ligase PIAS1 (651 aa).

Residue alanine 2 is modified to N-acetylalanine. Residues 2-200 (ADSAELKQMV…KCDFTVQVQL (199 aa)) are required for interaction with MSX1. Residues 11–45 (VMSLRVSELQVLLGYAGRNKHGRKHELLTKALHLL) form the SAP domain. An LXXLL motif motif is present at residues 19-23 (LQVLL). Residues lysine 40 and lysine 46 each participate in a glycyl lysine isopeptide (Lys-Gly) (interchain with G-Cter in SUMO2) cross-link. Residues 56 to 64 (KIKELYRRR) carry the Nuclear localization signal motif. The PINIT domain maps to 124–288 (HLTSALHPVH…SMAVYLVKQL (165 aa)). Glycyl lysine isopeptide (Lys-Gly) (interchain with G-Cter in SUMO2) cross-links involve residues lysine 137 and lysine 238. The SP-RING-type zinc finger occupies 320-405 (PDSEIATTSL…LKYCTDCDEI (86 aa)). Zn(2+) is bound by residues cysteine 351, histidine 353, cysteine 374, and cysteine 377. Positions 368–380 (KKPTWVCPVCDKK) match the Nuclear localization signal motif. Lysine 453 is covalently cross-linked (Glycyl lysine isopeptide (Lys-Gly) (interchain with G-Cter in SUMO2)). Positions 462 to 473 (LTIDSSSDEEEE) are SUMO1-binding. The segment at 465–511 (DSSSDEEEEEPSAKRTCPSLSPTSPLNNKGILSLPHQASPVSRTPSL) is disordered. Residues serine 467, serine 468, serine 483, and serine 485 each carry the phosphoserine modification. Residues 482-491 (PSLSPTSPLN) show a composition bias toward polar residues. Threonine 487 is modified (phosphothreonine). Position 488 is a phosphoserine (serine 488). Lysine 493 is covalently cross-linked (Glycyl lysine isopeptide (Lys-Gly) (interchain with G-Cter in SUMO2)). Phosphoserine is present on residues serine 503, serine 510, and serine 522. Tandem repeats lie at residues 520–523 (NTSL) and 557–560 (NTSL). Residues 520–615 (NTSLIQDYRH…GSSSGSNSSL (96 aa)) form a 4 X 4 AA repeats of N-T-S-L region. Residues 598-601 (STSL) form a 3; approximate repeat. The span at 599-621 (TSLPTTNGSSSGSNSSLVSSNSL) shows a compositional bias: low complexity. The segment at 599 to 632 (TSLPTTNGSSSGSNSSLVSSNSLRESHSHTVTNR) is disordered. The stretch at 612–615 (NSSL) is one 4; approximate repeat.

The protein belongs to the PIAS family. As to quaternary structure, interacts with NCOA2 and AR. Interacts with NR2C1; the interaction promotes its sumoylation. Interacts with DDX21, CSRP2, AXIN1, JUN, UBE2I, SUMO1, SATB2, PLAG1, TP53 and STAT1 (dimer), following IFNA1-stimulation. Interacts with SP3 (preferentially when SUMO-modified). Interacts with KLF8; the interaction results in SUMO ligation and repression of KLF8 transcriptional activity and of its cell cycle progression into G(1) phase. Interacts with CHUK/IKKA; this interaction induces PIAS1 phosphorylation. Interacts with PTK2/FAK1; the interaction promotes its sumoylation. Interacts with DDX5. Interacts with PML. Interacts with MTA1. Interacts with SUMO1P1/SUMO5. Interacts with PRDM1/Blimp-1. Interacts (via N-terminus) with MSX1 (via C-terminus); the interaction is required for the localization of both proteins to the nuclear periphery and specific binding of MSX1 to the core enhancer region in target gene promoters. (Microbial infection) Interacts with ebolavirus VP35; this interaction mediates the sumoylation of IRF7 and contributes to the viral inhibition of IFN-type I production. Sumoylated. Expressed in numerous tissues with highest level in testis.

The protein localises to the nucleus. The protein resides in the nucleus speckle. It localises to the PML body. It is found in the cytoplasm. Its subcellular location is the cytoskeleton. Its pathway is protein modification; protein sumoylation. In terms of biological role, functions as an E3-type small ubiquitin-like modifier (SUMO) ligase, stabilizing the interaction between UBE2I and the substrate, and as a SUMO-tethering factor. Catalyzes sumoylation of various proteins, such as CEBPB, MRE11, MTA1, PTK2 and PML. Plays a crucial role as a transcriptional coregulation in various cellular pathways, including the STAT pathway, the p53 pathway and the steroid hormone signaling pathway. In vitro, binds A/T-rich DNA. The effects of this transcriptional coregulation, transactivation or silencing, may vary depending upon the biological context. Mediates sumoylation of MRE11, stabilizing MRE11 on chromatin during end resection. Sumoylates PML (at 'Lys-65' and 'Lys-160') and PML-RAR and promotes their ubiquitin-mediated degradation. PIAS1-mediated sumoylation of PML promotes its interaction with CSNK2A1/CK2 which in turn promotes PML phosphorylation and degradation. Enhances the sumoylation of MTA1 and may participate in its paralog-selective sumoylation. Plays a dynamic role in adipogenesis by promoting the SUMOylation and degradation of CEBPB. Mediates the nuclear mobility and localization of MSX1 to the nuclear periphery, whereby MSX1 is brought into the proximity of target myoblast differentiation factor genes. Also required for the binding of MSX1 to the core enhancer region in target gene promoter regions, independent of its sumoylation activity. Capable of binding to the core enhancer region TAAT box in the MYOD1 gene promoter. Functionally, (Microbial infection) Restricts Epstein-Barr virus (EBV) lytic replication by acting as an inhibitor for transcription factors involved in lytic gene expression. The virus can use apoptotic caspases to antagonize PIAS1-mediated restriction and express its lytic genes. The protein is E3 SUMO-protein ligase PIAS1 (PIAS1) of Homo sapiens (Human).